A 105-amino-acid chain; its full sequence is uncharacterized protein (105 aa).

A disordered region spans residues tyrosine 58–threonine 105. 2 stretches are compositionally biased toward polar residues: residues arginine 71–glutamine 82 and serine 91–threonine 105.

It localises to the mitochondrion. This is an uncharacterized protein from Arabidopsis thaliana (Mouse-ear cress).